The following is a 125-amino-acid chain: Oxytocin-neurophysin 1 (125 aa).

A signal peptide spans 1–19; the sequence is MAGPSLACCLLGLLALTSA. A disulfide bond links Cys-20 and Cys-25. Gly-28 is subject to Glycine amide. 7 disulfides stabilise this stretch: Cys-41-Cys-85, Cys-44-Cys-58, Cys-52-Cys-75, Cys-59-Cys-65, Cys-92-Cys-104, Cys-98-Cys-116, and Cys-105-Cys-110.

It belongs to the vasopressin/oxytocin family. Interacts with oxytocin receptor (Ki=1.5 nM). Interacts with vasopressin V1aR/AVPR1A (Ki=37 nM), V1bR/AVPR1B (Ki=222 nM), and V2R/AVPR2 receptors (Ki=823 nM).

Functionally, neurophysin 1 specifically binds oxytocin. In terms of biological role, oxytocin causes contraction of the smooth muscle of the uterus and of the mammary gland. Acts by binding to oxytocin receptor (OXTR). This Sus scrofa (Pig) protein is Oxytocin-neurophysin 1 (OXT).